A 626-amino-acid polypeptide reads, in one-letter code: Chaperone protein HtpG (626 aa).

Positions 1–341 (MRKKKFKAES…SEDLSLNISR (341 aa)) are a; substrate-binding. The segment at 342 to 552 (EMLQHDRQLK…DGEVTIEMEK (211 aa)) is b. The segment at 553 to 626 (VLNAMPDSQQ…FTNDICKVMV (74 aa)) is c.

It belongs to the heat shock protein 90 family. Homodimer.

It is found in the cytoplasm. Functionally, molecular chaperone. Has ATPase activity. This is Chaperone protein HtpG from Bacillus velezensis (strain DSM 23117 / BGSC 10A6 / LMG 26770 / FZB42) (Bacillus amyloliquefaciens subsp. plantarum).